The primary structure comprises 159 residues: Urease subunit beta 2 (159 aa).

Residues 1-24 form a disordered region; the sequence is MAKEPTKAAHPQPEQTKTNHKAHR.

It belongs to the urease beta subunit family. In terms of assembly, heterotrimer of UreA (gamma), UreB (beta) and UreC (alpha) subunits. Three heterotrimers associate to form the active enzyme.

The protein resides in the cytoplasm. The catalysed reaction is urea + 2 H2O + H(+) = hydrogencarbonate + 2 NH4(+). It functions in the pathway nitrogen metabolism; urea degradation; CO(2) and NH(3) from urea (urease route): step 1/1. Functionally, disrupting the ure2 operon has no effect on urease activity, or pathogen survival in BALB/c mice when inoculated by gavage, but confers slightly enhanced resistance to low pH killing in vitro. This is Urease subunit beta 2 from Brucella suis biovar 1 (strain 1330).